The following is a 516-amino-acid chain: MQRRDFLKYSVALGVASALPLWSRAVFAAERPTLPIPDLLTTDARNRIQLTIGAGQSTFGEKTATTWGYNGNLLGPAVKLQRGKAVTVDIYNQLTEETTLHWHGLEVPGEVDGGPQGIIPPGGKRSVTLNVDQPAATCWFHPHQHGKTGRQVAMGLAGLVVIEDDEILKLMLPKQWGIDDVPVIVQDKKFSADGQIDYQLDVMTAAVGWFGDTLLTNGAIYPQHAAPRGWLRLRLLNGCNARSLNFATSDNRPLYVIASDGGLLPEPVKVNELPVLMGERFEVLVEVNDNKPFDLVTLPVSQMGMAIAPFDKPHPVMRIQPIAISASGALPDTLSSLPALPSLEGLTVRKLQLSMDPMLDMMGMQMLMEKYGDQAMVGMDHSQMMGHMGHGNMNHMNHGGKFDFHHANKINGQAFDMNKPMFAAAKGQYERWVISGVGDMMLHPFHIHGTQFRILSENGKPPAAHRAGWKDTVKVEGNVSEVLVKFNHDAPKERAYMAHCHLLEHEDTGMMLGFTV.

The segment at residues 1–28 (MQRRDFLKYSVALGVASALPLWSRAVFA) is a signal peptide (tat-type signal). 3 consecutive Plastocyanin-like domains span residues 55–165 (GQST…IEDD), 227–292 (PRGW…DNKP), and 399–516 (GGKF…GFTV). Cu cation contacts are provided by His101, His103, His141, and His143. Cu cation contacts are provided by His443, His446, His448, His499, Cys500, His501, and His505.

This sequence belongs to the multicopper oxidase family. In terms of assembly, monomer. Requires Cu cation as cofactor. In terms of processing, predicted to be exported by the Tat system. The position of the signal peptide cleavage has not been experimentally proven.

The protein resides in the periplasm. The catalysed reaction is 4 Cu(+) + O2 + 4 H(+) = 4 Cu(2+) + 2 H2O. In terms of biological role, multicopper oxidase involved in copper homeostasis and copper tolerance under aerobic conditions. Is responsible for the oxidation of Cu(+) to the less harmful Cu(2+) in the periplasm, thereby preventing Cu(+) from entering the cytoplasm. This Escherichia coli O157:H7 protein is Multicopper oxidase CueO (cueO).